The sequence spans 189 residues: Interferon alpha-13 (189 aa).

The signal sequence occupies residues 1–23; that stretch reads MARPCAFLMVLVVLSYWSACSLG. Disulfide bonds link C24/C122 and C52/C162. N94 and N101 each carry an N-linked (GlcNAc...) asparagine glycan.

It belongs to the alpha/beta interferon family.

Its subcellular location is the secreted. Exhibits antiviral activity against Theiler's virus, Mengo virus and vesicular stomatitis virus. Interferons alpha stimulate the production of two enzymes: a protein kinase and an oligoadenylate synthetase. In Mus musculus (Mouse), this protein is Interferon alpha-13 (Ifna13).